We begin with the raw amino-acid sequence, 133 residues long: Nickel-responsive regulator (133 aa).

Ni(2+)-binding residues include His-76, His-87, His-89, and Cys-95.

The protein belongs to the transcriptional regulatory CopG/NikR family. Homotetramer. Ni(2+) serves as cofactor.

Functionally, transcriptional repressor of the nikABCDE operon. Is active in the presence of excessive concentrations of intracellular nickel. In Escherichia coli O6:K15:H31 (strain 536 / UPEC), this protein is Nickel-responsive regulator.